A 937-amino-acid polypeptide reads, in one-letter code: Calsyntenin-2 (937 aa).

A signal peptide spans 1 to 22 (MKMRAITAMLLLVLSGQCGILA). At 23–818 (GKVNKHKPWI…NSDHISGTPP (796 aa)) the chain is on the extracellular side. Cadherin domains follow at residues 32-148 (IETS…SPVF) and 149-249 (REPL…KPGW). The N-linked (GlcNAc...) asparagine glycan is linked to N86. 3 N-linked (GlcNAc...) asparagine glycosylation sites follow: N330, N365, and N716. Residues 819 to 839 (AATVVIVMCIAALVVIVVLGI) form a helical membrane-spanning segment. The Cytoplasmic segment spans residues 840-937 (YRIHTTHQDS…LEWDPSTLPY (98 aa)). A disordered region spans residues 846 to 937 (HQDSSKEDEE…LEWDPSTLPY (92 aa)). The span at 865 to 874 (DNSNLNSIEG) shows a compositional bias: polar residues. Acidic residues-rich tracts occupy residues 881–900 (VREEEPEEDEDEDEEDDDLA) and 907–917 (ESEDSDEDEET).

This sequence belongs to the calsyntenin family. In terms of assembly, homooligomer and heterooligomer; mediates both homophilic and heterophilc interactions with clstn1 and clstn3 paralogs via cadherin domains. As to expression, by 48 hours post-fertilization (hpf), widely expressed in the brain, with strong expression in the telencephalon and the midbrain.

The protein localises to the postsynaptic cell membrane. The protein resides in the endoplasmic reticulum membrane. It localises to the golgi apparatus membrane. Its subcellular location is the cell projection. It is found in the dendrite. Functionally, postsynaptic adhesion molecule. Promotes synapse development by acting as a cell adhesion molecule at the postsynaptic membrane, which associates with presynaptic neurexins. This is Calsyntenin-2 (clstn2a) from Danio rerio (Zebrafish).